The primary structure comprises 887 residues: Chaperone protein ClpB 2 (887 aa).

Residues 6-147 (PTKFTDKAWE…AATVKAIRGA (142 aa)) enclose the Clp R domain. Repeat regions lie at residues 9 to 73 (FTDK…ARQQ) and 84 to 147 (CGRS…IRGA). The NBD1 stretch occupies residues 160-342 (AALEKYGRDL…RRFQQVYIGQ (183 aa)). 207–214 (GEPGVGKT) lines the ATP pocket. The interval 343–559 (PSVEDTISIL…IAEIVAKWTG (217 aa)) is linker. Residues 393–535 (IDLVDEAAAK…TEAQLLELQA (143 aa)) adopt a coiled-coil conformation. An NBD2 region spans residues 569-780 (ERQKLLQLEQ…RIDDVILFHG (212 aa)). 619 to 626 (GPTGVGKT) provides a ligand contact to ATP. The interval 781-887 (LGRTELAQIA…TGDRDTVSAS (107 aa)) is C-terminal.

Belongs to the ClpA/ClpB family. Homohexamer. The oligomerization is ATP-dependent.

Its subcellular location is the cytoplasm. In terms of biological role, part of a stress-induced multi-chaperone system, it is involved in the recovery of the cell from heat-induced damage, in cooperation with DnaK, DnaJ and GrpE. Acts before DnaK, in the processing of protein aggregates. Protein binding stimulates the ATPase activity; ATP hydrolysis unfolds the denatured protein aggregates, which probably helps expose new hydrophobic binding sites on the surface of ClpB-bound aggregates, contributing to the solubilization and refolding of denatured protein aggregates by DnaK. This is Chaperone protein ClpB 2 (clpB2) from Thermosynechococcus vestitus (strain NIES-2133 / IAM M-273 / BP-1).